The following is a 92-amino-acid chain: DNA-binding protein HU (92 aa).

The segment at 58-92 is disordered; sequence AGTARNPRTGETVNRPASKTARFQVGEGLKSSLNS.

Belongs to the bacterial histone-like protein family. Homodimer.

Its function is as follows. Histone-like DNA-binding protein which is capable of wrapping DNA to stabilize it, and thus to prevent its denaturation under extreme environmental conditions. This is DNA-binding protein HU (hup) from Caulobacter vibrioides (strain ATCC 19089 / CIP 103742 / CB 15) (Caulobacter crescentus).